The sequence spans 384 residues: 8-amino-7-oxononanoate synthase (384 aa).

Residue R21 coordinates substrate. Residue 108–109 (GF) coordinates pyridoxal 5'-phosphate. H133 serves as a coordination point for substrate. The pyridoxal 5'-phosphate site is built by S179, H207, and T233. K236 is modified (N6-(pyridoxal phosphate)lysine). T352 is a binding site for substrate.

The protein belongs to the class-II pyridoxal-phosphate-dependent aminotransferase family. BioF subfamily. As to quaternary structure, homodimer. Requires pyridoxal 5'-phosphate as cofactor.

The enzyme catalyses 6-carboxyhexanoyl-[ACP] + L-alanine + H(+) = (8S)-8-amino-7-oxononanoate + holo-[ACP] + CO2. It participates in cofactor biosynthesis; biotin biosynthesis. Catalyzes the decarboxylative condensation of pimeloyl-[acyl-carrier protein] and L-alanine to produce 8-amino-7-oxononanoate (AON), [acyl-carrier protein], and carbon dioxide. In Citrobacter koseri (strain ATCC BAA-895 / CDC 4225-83 / SGSC4696), this protein is 8-amino-7-oxononanoate synthase.